A 360-amino-acid chain; its full sequence is tRNA-specific 2-thiouridylase MnmA (360 aa).

ATP-binding positions include glycine 8–serine 15 and methionine 34. An interaction with target base in tRNA region spans residues asparagine 94–aspartate 96. Residue cysteine 99 is the Nucleophile of the active site. Residues cysteine 99 and cysteine 195 are joined by a disulfide bond. Glycine 123 is an ATP binding site. Positions lysine 145–glutamine 147 are interaction with tRNA. Residue cysteine 195 is the Cysteine persulfide intermediate of the active site. Positions arginine 307–tyrosine 308 are interaction with tRNA.

This sequence belongs to the MnmA/TRMU family.

Its subcellular location is the cytoplasm. It catalyses the reaction S-sulfanyl-L-cysteinyl-[protein] + uridine(34) in tRNA + AH2 + ATP = 2-thiouridine(34) in tRNA + L-cysteinyl-[protein] + A + AMP + diphosphate + H(+). Functionally, catalyzes the 2-thiolation of uridine at the wobble position (U34) of tRNA, leading to the formation of s(2)U34. The sequence is that of tRNA-specific 2-thiouridylase MnmA from Methylobacillus flagellatus (strain ATCC 51484 / DSM 6875 / VKM B-1610 / KT).